The chain runs to 468 residues: Trehalose-2-sulfate acyltransferase PapA2 (468 aa).

Belongs to the PapA acyltransferase family.

It catalyses the reaction 2-O-sulfo-alpha,alpha-trehalose + hexadecanoyl-CoA = 2-O-sulfo-2'-O-hexadecanoyl-alpha,alpha-trehalose + CoA. Functionally, required for the biosynthesis of sulfolipid-1 (SL-1), a major mycobacterial cell wall lipid. Catalyzes the acylation of trehalose-2-sulfate by adding the palmitoyl group at the 2'-position to yield the intermediate trehalose-2-sulfate-2'-palmitate (SL659). The sequence is that of Trehalose-2-sulfate acyltransferase PapA2 (papA2) from Mycobacterium bovis (strain ATCC BAA-935 / AF2122/97).